Here is a 215-residue protein sequence, read N- to C-terminus: Orotate phosphoribosyltransferase (215 aa).

5-phospho-alpha-D-ribose 1-diphosphate is bound at residue Lys-26. 34–35 (FF) lines the orotate pocket. 5-phospho-alpha-D-ribose 1-diphosphate is bound by residues 72-73 (YK), Arg-99, Lys-100, Lys-103, His-105, and 124-132 (DDVITAGTA). The orotate site is built by Thr-128 and Arg-156.

Belongs to the purine/pyrimidine phosphoribosyltransferase family. PyrE subfamily. In terms of assembly, homodimer. Requires Mg(2+) as cofactor.

The catalysed reaction is orotidine 5'-phosphate + diphosphate = orotate + 5-phospho-alpha-D-ribose 1-diphosphate. It functions in the pathway pyrimidine metabolism; UMP biosynthesis via de novo pathway; UMP from orotate: step 1/2. Catalyzes the transfer of a ribosyl phosphate group from 5-phosphoribose 1-diphosphate to orotate, leading to the formation of orotidine monophosphate (OMP). The chain is Orotate phosphoribosyltransferase from Cellvibrio japonicus (strain Ueda107) (Pseudomonas fluorescens subsp. cellulosa).